Reading from the N-terminus, the 458-residue chain is GTPase Obg (458 aa).

In terms of domain architecture, Obg spans 1 to 157; sequence MSFLDRVKIY…ITLYLELKVL (157 aa). An OBG-type G domain is found at 158 to 326; it reads ADLGLVGFPN…VLNEIVKVIS (169 aa). Residues 164-171, 189-193, 210-213, 280-283, and 307-309 contribute to the GTP site; these read GFPNAGKS, FTTLN, DIPG, NKAD, and SAA. Mg(2+) contacts are provided by S171 and T191. Residues 341 to 419 form the OCT domain; it reads AVHGVEPLFK…VGQKEFEWSG (79 aa). Residues 420-458 form a disordered region; it reads TELDSERAEQPDFEGYKRRTTQAERLEKRRQRRLKKEEK. The segment covering 423–446 has biased composition (basic and acidic residues); it reads DSERAEQPDFEGYKRRTTQAERLE. The span at 447 to 458 shows a compositional bias: basic residues; it reads KRRQRRLKKEEK.

This sequence belongs to the TRAFAC class OBG-HflX-like GTPase superfamily. OBG GTPase family. In terms of assembly, monomer. It depends on Mg(2+) as a cofactor.

The protein resides in the cytoplasm. Its function is as follows. An essential GTPase which binds GTP, GDP and possibly (p)ppGpp with moderate affinity, with high nucleotide exchange rates and a fairly low GTP hydrolysis rate. Plays a role in control of the cell cycle, stress response, ribosome biogenesis and in those bacteria that undergo differentiation, in morphogenesis control. This Elusimicrobium minutum (strain Pei191) protein is GTPase Obg.